We begin with the raw amino-acid sequence, 1933 residues long: Protein TIC 214 (1933 aa).

6 helical membrane passes run 18–38 (IVNS…FSIG), 60–80 (ATTG…YAPL), 87–107 (PHTI…FYTD), 128–148 (FSIQ…HFIL), 176–196 (VGWL…LVWI), and 230–250 (IFYI…PAPL). 4 disordered regions span residues 266-291 (AKGK…VGVG), 473-514 (KTKS…SRDN), 808-832 (THRE…AEDP), and 1066-1121 (ESFT…SSNA). Residues 278-289 (EEGDVEKEDEVG) show a composition bias toward acidic residues. A compositionally biased stretch (polar residues) spans 476–487 (SLSPEKTSGDNL). Basic and acidic residues-rich tracts occupy residues 488-514 (ETSR…SRDN) and 819-832 (DEKN…AEDP). Residues 1066 to 1078 (ESFTQISSPSSTN) are compositionally biased toward polar residues. Basic residues predominate over residues 1105–1115 (KEKKKKKRSLK). The chain crosses the membrane as a helical span at residues 1135–1155 (LPVYLKLFIQRIYTGIFFSII). The disordered stretch occupies residues 1562 to 1642 (NADNEKNEKK…SAESTTKKVT (81 aa)). The span at 1564-1642 (DNEKNEKKEA…SAESTTKKVT (79 aa)) shows a compositional bias: basic and acidic residues.

The protein belongs to the TIC214 family. In terms of assembly, part of the Tic complex.

It is found in the plastid. The protein localises to the chloroplast inner membrane. Its function is as follows. Involved in protein precursor import into chloroplasts. May be part of an intermediate translocation complex acting as a protein-conducting channel at the inner envelope. This chain is Protein TIC 214, found in Jasminum nudiflorum (Winter jasmine).